Reading from the N-terminus, the 690-residue chain is Potassium-transporting ATPase ATP-binding subunit (690 aa).

Residues 1-23 (MNSTSTVRQPGGPRQQRRHTPKA) are disordered. 4 helical membrane-spanning segments follow: residues 44–64 (IMVK…TGML), 78–98 (AMFN…ANFA), 233–253 (IALT…VATL), and 268–288 (LLIA…LSAI). Asp321 functions as the 4-aspartylphosphate intermediate in the catalytic mechanism. ATP contacts are provided by residues Asp358, Glu362, 389-396 (FSARTRMS), and Lys408. Residues Asp531 and Asp535 each contribute to the Mg(2+) site. Transmembrane regions (helical) follow at residues 601-621 (FAII…IMDL), 627-647 (AVLS…PLAL), and 665-685 (ILVY…LIDL).

The protein belongs to the cation transport ATPase (P-type) (TC 3.A.3) family. Type IA subfamily. As to quaternary structure, the system is composed of three essential subunits: KdpA, KdpB and KdpC.

It localises to the cell inner membrane. The catalysed reaction is K(+)(out) + ATP + H2O = K(+)(in) + ADP + phosphate + H(+). Part of the high-affinity ATP-driven potassium transport (or Kdp) system, which catalyzes the hydrolysis of ATP coupled with the electrogenic transport of potassium into the cytoplasm. This subunit is responsible for energy coupling to the transport system and for the release of the potassium ions to the cytoplasm. The sequence is that of Potassium-transporting ATPase ATP-binding subunit from Synechocystis sp. (strain ATCC 27184 / PCC 6803 / Kazusa).